The chain runs to 251 residues: Triosephosphate isomerase (251 aa).

8 to 10 (NWK) is a substrate binding site. H97 serves as the catalytic Electrophile. E170 acts as the Proton acceptor in catalysis. Substrate is bound by residues G176, S215, and 236–237 (GG).

The protein belongs to the triosephosphate isomerase family. In terms of assembly, homodimer.

It localises to the cytoplasm. The catalysed reaction is D-glyceraldehyde 3-phosphate = dihydroxyacetone phosphate. The protein operates within carbohydrate biosynthesis; gluconeogenesis. It participates in carbohydrate degradation; glycolysis; D-glyceraldehyde 3-phosphate from glycerone phosphate: step 1/1. In terms of biological role, involved in the gluconeogenesis. Catalyzes stereospecifically the conversion of dihydroxyacetone phosphate (DHAP) to D-glyceraldehyde-3-phosphate (G3P). The polypeptide is Triosephosphate isomerase (Nitratidesulfovibrio vulgaris (strain ATCC 29579 / DSM 644 / CCUG 34227 / NCIMB 8303 / VKM B-1760 / Hildenborough) (Desulfovibrio vulgaris)).